The primary structure comprises 125 residues: uncharacterized protein (125 aa).

This is an uncharacterized protein from Pasteurella multocida (strain Pm70).